A 513-amino-acid polypeptide reads, in one-letter code: ATP synthase subunit alpha (513 aa).

ATP is bound at residue 169–176 (GDRQVGKT).

Belongs to the ATPase alpha/beta chains family. As to quaternary structure, F-type ATPases have 2 components, CF(1) - the catalytic core - and CF(0) - the membrane proton channel. CF(1) has five subunits: alpha(3), beta(3), gamma(1), delta(1), epsilon(1). CF(0) has three main subunits: a(1), b(2) and c(9-12). The alpha and beta chains form an alternating ring which encloses part of the gamma chain. CF(1) is attached to CF(0) by a central stalk formed by the gamma and epsilon chains, while a peripheral stalk is formed by the delta and b chains.

It localises to the cell inner membrane. It catalyses the reaction ATP + H2O + 4 H(+)(in) = ADP + phosphate + 5 H(+)(out). Its function is as follows. Produces ATP from ADP in the presence of a proton gradient across the membrane. The alpha chain is a regulatory subunit. The sequence is that of ATP synthase subunit alpha from Aeromonas salmonicida (strain A449).